Consider the following 1391-residue polypeptide: DNA-directed RNA polymerase subunit beta' (1391 aa).

The Zn(2+) site is built by Cys-72, Cys-74, Cys-87, and Cys-90. 3 residues coordinate Mg(2+): Asp-462, Asp-464, and Asp-466. Residues Cys-816, Cys-890, Cys-897, and Cys-900 each contribute to the Zn(2+) site.

The protein belongs to the RNA polymerase beta' chain family. The RNAP catalytic core consists of 2 alpha, 1 beta, 1 beta' and 1 omega subunit. When a sigma factor is associated with the core the holoenzyme is formed, which can initiate transcription. Mg(2+) serves as cofactor. Zn(2+) is required as a cofactor.

It carries out the reaction RNA(n) + a ribonucleoside 5'-triphosphate = RNA(n+1) + diphosphate. Its function is as follows. DNA-dependent RNA polymerase catalyzes the transcription of DNA into RNA using the four ribonucleoside triphosphates as substrates. In Neisseria meningitidis serogroup C / serotype 2a (strain ATCC 700532 / DSM 15464 / FAM18), this protein is DNA-directed RNA polymerase subunit beta'.